Reading from the N-terminus, the 144-residue chain is Transcriptional regulator SlyA (144 aa).

In terms of domain architecture, HTH marR-type spans 2–135 (ESPLGSDLAR…LITLIAKLEH (134 aa)). The segment at residues 49–72 (QIQLAKAIGIEQPSLVRTLDQLEE) is a DNA-binding region (H-T-H motif).

The protein belongs to the SlyA family. Homodimer.

Its function is as follows. Transcription regulator that can specifically activate or repress expression of target genes. The polypeptide is Transcriptional regulator SlyA (Escherichia coli (strain 55989 / EAEC)).